Consider the following 236-residue polypeptide: DNA repair protein RecO (236 aa).

It belongs to the RecO family.

Involved in DNA repair and RecF pathway recombination. The chain is DNA repair protein RecO from Cellvibrio japonicus (strain Ueda107) (Pseudomonas fluorescens subsp. cellulosa).